The sequence spans 318 residues: tRNA-modifying protein YgfZ (318 aa).

Folate-binding residues include Trp28 and Trp182.

The protein belongs to the tRNA-modifying YgfZ family.

The protein resides in the cytoplasm. In terms of biological role, folate-binding protein involved in regulating the level of ATP-DnaA and in the modification of some tRNAs. It is probably a key factor in regulatory networks that act via tRNA modification, such as initiation of chromosomal replication. This chain is tRNA-modifying protein YgfZ, found in Aliivibrio fischeri (strain MJ11) (Vibrio fischeri).